Here is a 454-residue protein sequence, read N- to C-terminus: PC-esterase domain-containing protein 1A (454 aa).

It belongs to the PC-esterase family.

The chain is PC-esterase domain-containing protein 1A (PCED1A) from Homo sapiens (Human).